A 395-amino-acid chain; its full sequence is Protein UNIFOLIATA (395 aa).

Disordered regions lie at residues 147 to 170 (SQEG…GGGS) and 185 to 223 (QIRR…GERQ). The segment covering 202–211 (EEGEEEEEDN) has biased composition (acidic residues). 3 consecutive DNA-binding regions follow at residues 224–228 (REHPF), 293–300 (NKPKMRHY), and 364–367 (YGPT).

The protein belongs to the FLO/LFY family. Highly expressed in leaf, leaflet, inflorescence and lateral shoot primordia on the main shoot axis, and in floral organ and carpel primordia.

It localises to the nucleus. Functionally, may regulate indeterminacy during leaf and flower development. The chain is Protein UNIFOLIATA (UNI) from Pisum sativum (Garden pea).